The following is a 201-amino-acid chain: Dephospho-CoA kinase (201 aa).

The DPCK domain occupies 4 to 201 (VIGLTGGIAS…LLDTWSNIEK (198 aa)). 12–17 (ASGKST) lines the ATP pocket.

Belongs to the CoaE family.

The protein localises to the cytoplasm. The catalysed reaction is 3'-dephospho-CoA + ATP = ADP + CoA + H(+). It functions in the pathway cofactor biosynthesis; coenzyme A biosynthesis; CoA from (R)-pantothenate: step 5/5. Catalyzes the phosphorylation of the 3'-hydroxyl group of dephosphocoenzyme A to form coenzyme A. This chain is Dephospho-CoA kinase, found in Bacillus licheniformis (strain ATCC 14580 / DSM 13 / JCM 2505 / CCUG 7422 / NBRC 12200 / NCIMB 9375 / NCTC 10341 / NRRL NRS-1264 / Gibson 46).